The following is a 323-amino-acid chain: rRNA 2'-O-methyltransferase fibrillarin (323 aa).

The interval 1–80 is disordered; it reads MGFERGGRGG…AKGGAAGKKV (80 aa). An asymmetric dimethylarginine mark is found at Arg-5, Arg-8, Arg-12, Arg-16, Arg-23, Arg-26, Arg-30, Arg-34, Arg-41, Arg-47, Arg-49, Arg-53, Arg-57, Arg-62, Arg-64, and Arg-68. Over residues 8–76 the composition is skewed to gly residues; it reads RGGARGGGRG…ARGGAKGGAA (69 aa). S-adenosyl-L-methionine is bound by residues 174–175, 193–194, 218–219, and 238–241; these read TS, EF, DA, and DVAQ.

The protein belongs to the methyltransferase superfamily. Fibrillarin family. Component of box C/D small nucleolar ribonucleoprotein (snoRNP) particles. By homology to other fibrillarins, some or all of the N-terminal domain arginines are modified to asymmetric dimethylarginine (DMA).

It localises to the nucleus. The protein localises to the nucleolus. It carries out the reaction L-glutaminyl-[histone H2A] + S-adenosyl-L-methionine = N(5)-methyl-L-glutaminyl-[histone H2A] + S-adenosyl-L-homocysteine + H(+). S-adenosyl-L-methionine-dependent methyltransferase that has the ability to methylate both RNAs and proteins. Involved in pre-rRNA processing. Utilizes the methyl donor S-adenosyl-L-methionine to catalyze the site-specific 2'-hydroxyl methylation of ribose moieties in pre-ribosomal RNA. Site specificity is provided by a guide RNA that base pairs with the substrate. Methylation occurs at a characteristic distance from the sequence involved in base pairing with the guide RNA. Also acts as a protein methyltransferase by mediating methylation of 'Gln-105' of histone H2A (H2AQ105me), a modification that impairs binding of the FACT complex and is specifically present at 35S ribosomal DNA locus. This is rRNA 2'-O-methyltransferase fibrillarin (nop-1) from Neurospora crassa (strain ATCC 24698 / 74-OR23-1A / CBS 708.71 / DSM 1257 / FGSC 987).